The chain runs to 399 residues: Exodeoxyribonuclease 7 large subunit (399 aa).

Belongs to the XseA family. Heterooligomer composed of large and small subunits.

Its subcellular location is the cytoplasm. It catalyses the reaction Exonucleolytic cleavage in either 5'- to 3'- or 3'- to 5'-direction to yield nucleoside 5'-phosphates.. Functionally, bidirectionally degrades single-stranded DNA into large acid-insoluble oligonucleotides, which are then degraded further into small acid-soluble oligonucleotides. The polypeptide is Exodeoxyribonuclease 7 large subunit (Clostridium botulinum (strain Eklund 17B / Type B)).